The following is a 467-amino-acid chain: Peroxisome proliferator-activated receptor alpha (467 aa).

Residues 99–173 (NIECRICGDK…VGMSHNAIRF (75 aa)) constitute a DNA-binding region (nuclear receptor). NR C4-type zinc fingers lie at residues 102-122 (CRICGDKASGYHYGVHACEGC) and 139-161 (CDRSCKIQKKNRNKCQYCRFHKC). The NR LBD domain occupies 239 to 466 (FVIHDMETLC…PLLQEIYRDM (228 aa)). The segment at 304–433 (DQVTLLKYGV…PKLLQKLADL (130 aa)) is required for heterodimerization with RXRA.

Belongs to the nuclear hormone receptor family. NR1 subfamily. Heterodimer; with RXRA. This heterodimerization is required for DNA binding and transactivation activity. Interacts with NCOA3 coactivator. Interacts with CITED2; the interaction stimulates its transcriptional activity. Also interacts with PPARBP in vitro. Interacts with AKAP13, LPIN1, PRDM16 and coactivator NCOA6. Interacts with ASXL1 and ASXL2. Interacts with PER2. Interacts with SIRT1; the interaction seems to be modulated by NAD(+) levels. Interacts with CRY1 and CRY2. In hepatocytes, interacts with PAQR3 and HUWE1; the interactions promote PPARA poylubiquitination and HUWE1-mediated degradation. In terms of processing, ubiquitinated by E3 ubiquitin-protein ligase HUWE1; leading to proteasomal degradation. Post-translationally, phosphorylated.

It is found in the nucleus. Its function is as follows. Ligand-activated transcription factor. Key regulator of lipid metabolism. Activated by the endogenous ligand 1-palmitoyl-2-oleoyl-sn-glycerol-3-phosphocholine (16:0/18:1-GPC). Activated by oleylethanolamide, a naturally occurring lipid that regulates satiety. Receptor for peroxisome proliferators such as hypolipidemic drugs and fatty acids. Regulates the peroxisomal beta-oxidation pathway of fatty acids. Functions as a transcription activator for the ACOX1 and P450 genes. Transactivation activity requires heterodimerization with RXRA and is antagonized by NR2C2. May be required for the propagation of clock information to metabolic pathways regulated by PER2. In Cavia porcellus (Guinea pig), this protein is Peroxisome proliferator-activated receptor alpha (PPARA).